The following is a 150-amino-acid chain: Large ribosomal subunit protein bL9 (150 aa).

It belongs to the bacterial ribosomal protein bL9 family.

Its function is as follows. Binds to the 23S rRNA. In Neisseria meningitidis serogroup C / serotype 2a (strain ATCC 700532 / DSM 15464 / FAM18), this protein is Large ribosomal subunit protein bL9.